Here is a 484-residue protein sequence, read N- to C-terminus: uncharacterized protein (484 aa).

Over residues 1 to 14 (MIDSTSTATATSKT) the composition is skewed to low complexity. The interval 1–32 (MIDSTSTATATSKTVELNTNGSKTDASSENGT) is disordered. The span at 15–32 (VELNTNGSKTDASSENGT) shows a compositional bias: polar residues. Position 305 is an N6-(pyridoxal phosphate)lysine (lysine 305).

The protein belongs to the class-III pyridoxal-phosphate-dependent aminotransferase family. The cofactor is pyridoxal 5'-phosphate.

This is an uncharacterized protein from Schizosaccharomyces pombe (strain 972 / ATCC 24843) (Fission yeast).